The chain runs to 298 residues: Biphenyl-2,3-diol 1,2-dioxygenase (298 aa).

2 VOC domains span residues 5–119 (SLGY…IYYG) and 143–264 (GLGH…YGWS). Residues histidine 146, histidine 210, and glutamate 260 each contribute to the Fe cation site.

The protein belongs to the extradiol ring-cleavage dioxygenase family. As to quaternary structure, homooctamer. The enzyme is composed of two planar tetramers rotated at 45 degrees relative to each other, with a channel in the middle. It depends on Fe(2+) as a cofactor.

It catalyses the reaction biphenyl-2,3-diol + O2 = 2-hydroxy-6-oxo-6-phenylhexa-2,4-dienoate + H(+). It participates in xenobiotic degradation; biphenyl degradation; 2-hydroxy-2,4-pentadienoate and benzoate from biphenyl: step 3/4. Its function is as follows. Shows a preference for catechols with groups immediately adjacent to the hydroxyl substituents. The protein is Biphenyl-2,3-diol 1,2-dioxygenase (bphC) of Paraburkholderia xenovorans (strain LB400).